A 959-amino-acid polypeptide reads, in one-letter code: Translation initiation factor IF-2 (959 aa).

Residues 1 to 10 (MSDKTNDDKT) are compositionally biased toward basic and acidic residues. Residues 1–374 (MSDKTNDDKT…SQMQETREKI (374 aa)) form a disordered region. The span at 27-37 (EQSTVRQNFSH) shows a compositional bias: polar residues. Low complexity-rich tracts occupy residues 63 to 118 (AAAA…VTKP) and 128 to 138 (QRPGGQQAQRP). Composition is skewed to basic and acidic residues over residues 154 to 225 (SEMD…EAAK) and 232 to 241 (ARSERRDDAR). A compositionally biased stretch (low complexity) spans 246 to 284 (GARPQQAGRPQGGRPQPAGRPQQGSPRPAPIIADAAPIA). Residues 318-333 (PEVRAPKVVKGEDDRR) are compositionally biased toward basic and acidic residues. Residues 457–626 (SRPPVVTIMG…LLQAEMLDLK (170 aa)) enclose the tr-type G domain. Residues 466 to 473 (GHVDHGKT) form a G1 region. 466–473 (GHVDHGKT) contributes to the GTP binding site. Residues 491-495 (GITQH) are G2. The segment at 512–515 (DTPG) is G3. GTP contacts are provided by residues 512–516 (DTPGH) and 566–569 (NKID). A G4 region spans residues 566 to 569 (NKID). A G5 region spans residues 602 to 604 (SAK).

This sequence belongs to the TRAFAC class translation factor GTPase superfamily. Classic translation factor GTPase family. IF-2 subfamily.

The protein localises to the cytoplasm. One of the essential components for the initiation of protein synthesis. Protects formylmethionyl-tRNA from spontaneous hydrolysis and promotes its binding to the 30S ribosomal subunits. Also involved in the hydrolysis of GTP during the formation of the 70S ribosomal complex. This chain is Translation initiation factor IF-2, found in Brucella suis biovar 1 (strain 1330).